The primary structure comprises 781 residues: Mitochondrial inner membrane m-AAA protease component paraplegin (781 aa).

The transit peptide at Met1–Tyr43 directs the protein to the mitochondrion. Residues Val44 to Gly105 constitute a propeptide, removed in mature form. Residues Gly105 to Glu134 are disordered. Residues Leu106–Thr144 are Mitochondrial matrix-facing. Positions Lys109–Glu134 are enriched in basic and acidic residues. The helical transmembrane segment at Leu145 to Ile165 threads the bilayer. Residues Ser166–Thr248 are Mitochondrial intermembrane-facing. Residues Gly249–Trp269 traverse the membrane as a helical segment. The Mitochondrial matrix portion of the chain corresponds to Tyr270–Pro781. Positions 312, 352, 353, 354, 355, 356, and 357 each coordinate ATP. Tyr505 carries the 3'-nitrotyrosine modification. A Zn(2+)-binding site is contributed by His574. Glu575 is an active-site residue. Zn(2+) is bound by residues His578 and Asp650. Positions His701–Pro781 are interaction with PPIF.

It in the N-terminal section; belongs to the AAA ATPase family. This sequence in the C-terminal section; belongs to the peptidase M41 family. In terms of assembly, forms heterooligomers with AFG3L2; the m-AAA protease is composed of heterohexamers of AFG3L2 and SPG7. Component of the mitochondrial permeability transition pore complex (mPTPC), at least composed of SPG7, VDAC1 and PPIF. Interacts with MAIP1. The cofactor is Zn(2+). Upon import into the mitochondrion, the N-terminal transit peptide is cleaved by the mitochondrial-processing peptidase (MPP) to generate an intermediate form which undergoes a second proteolytic cleavage mediated by proteases AFG3L2 removing an additional N-terminal fragment to generate the proteolytically active mature form.

Its subcellular location is the mitochondrion inner membrane. It carries out the reaction ATP + H2O = ADP + phosphate + H(+). Catalytic component of the m-AAA protease, a protease that plays a key role in proteostasis of inner mitochondrial membrane proteins, and which is essential for axonal and neuron development. SPG7 possesses both ATPase and protease activities: the ATPase activity is required to unfold substrates, threading them into the internal proteolytic cavity for hydrolysis into small peptide fragments. The m-AAA protease exerts a dual role in the mitochondrial inner membrane: it mediates the processing of specific regulatory proteins and ensures protein quality control by degrading misfolded polypeptides. Mediates protein maturation of the mitochondrial ribosomal subunit MRPL32/bL32m by catalyzing the cleavage of the presequence of MRPL32/bL32m prior to assembly into the mitochondrial ribosome. Acts as a regulator of calcium in neurons by mediating degradation of SMDT1/EMRE before its assembly with the uniporter complex, limiting the availability of SMDT1/EMRE for MCU assembly and promoting efficient assembly of gatekeeper subunits with MCU. Also regulates mitochondrial calcium by catalyzing degradation of MCU. Plays a role in the formation and regulation of the mitochondrial permeability transition pore (mPTP) and its proteolytic activity is dispensable for this function. The protein is Mitochondrial inner membrane m-AAA protease component paraplegin (Spg7) of Rattus norvegicus (Rat).